Here is a 190-residue protein sequence, read N- to C-terminus: Small ribosomal subunit protein eS7 (190 aa).

Belongs to the eukaryotic ribosomal protein eS7 family.

The sequence is that of Small ribosomal subunit protein eS7 (RPS7) from Avicennia marina (Grey mangrove).